Consider the following 316-residue polypeptide: uncharacterized protein (316 aa).

The disordered stretch occupies residues 285–316 (APEGDLGDIIEVDPSEPRSDPYRRLRTPPPGG). Residues 289–298 (DLGDIIEVDP) show a composition bias toward acidic residues.

Its function is as follows. Possibly necessary for replication. This is an uncharacterized protein from Halobacterium salinarum (Halobacterium halobium).